The primary structure comprises 297 residues: MSFTVVGSNIYDTTLLMTRKGQNGAPDEVIPRPGFLTLLLNDIDSLRTRVELHNLIDNLNLATNEDYVKFAEYRTLFSQTTDMIRLAYTNGQPAVQTRATDSRTGSVFYANTLTGDKAGNLFRLLAPIAYRYLDVGLPRLFSYIHAQIGTTPAFRYNFDIQPIIKLAITNEPLDYGEWIGQEGIHELERNVMIILSCSNITILAVLSIVGLGVGSHIMTSAADQEAWVGSPFMLSTDNFGNARPFTAPNPSYAQTLRLPIPRIFSAPNRPVWVQSKTSETQSVSGSTHSDEKLTAPM.

The helical transmembrane segment at 191–211 (VMIILSCSNITILAVLSIVGL) threads the bilayer. Polar residues predominate over residues 275–287 (SKTSETQSVSGST). Residues 275 to 297 (SKTSETQSVSGSTHSDEKLTAPM) are disordered. Positions 288–297 (HSDEKLTAPM) are enriched in basic and acidic residues.

The protein resides in the host membrane. This is an uncharacterized protein from Cryphonectria parasitica mycoreovirus 1 (strain 9B21) (CpMYRV-1).